A 191-amino-acid chain; its full sequence is Phosphoheptose isomerase (191 aa).

An SIS domain is found at 37 to 191; the sequence is IADSFKQDGK…IIQLIEKEME (155 aa). 52-54 lines the substrate pocket; that stretch reads NGG. Residues His-61 and Glu-65 each contribute to the Zn(2+) site. Substrate contacts are provided by residues Glu-65, 93–94, 119–121, Ser-124, and Gln-172; these read ND and STS. Zn(2+)-binding residues include Gln-172 and His-180.

The protein belongs to the SIS family. GmhA subfamily. In terms of assembly, homotetramer. Zn(2+) is required as a cofactor.

Its subcellular location is the cytoplasm. The enzyme catalyses 2 D-sedoheptulose 7-phosphate = D-glycero-alpha-D-manno-heptose 7-phosphate + D-glycero-beta-D-manno-heptose 7-phosphate. The protein operates within carbohydrate biosynthesis; D-glycero-D-manno-heptose 7-phosphate biosynthesis; D-glycero-alpha-D-manno-heptose 7-phosphate and D-glycero-beta-D-manno-heptose 7-phosphate from sedoheptulose 7-phosphate: step 1/1. It functions in the pathway bacterial outer membrane biogenesis; LPS core biosynthesis. In terms of biological role, catalyzes the isomerization of sedoheptulose 7-phosphate in D-glycero-D-manno-heptose 7-phosphate. The chain is Phosphoheptose isomerase from Vibrio parahaemolyticus serotype O3:K6 (strain RIMD 2210633).